Consider the following 442-residue polypeptide: tRNA modification GTPase MnmE (442 aa).

3 residues coordinate (6S)-5-formyl-5,6,7,8-tetrahydrofolate: Arg-21, Glu-79, and Lys-118. The TrmE-type G domain occupies 214–367; it reads GFKIAIVGKP…LKEELQNYLN (154 aa). Asn-224 contributes to the K(+) binding site. GTP contacts are provided by residues 224 to 229, 243 to 249, and 268 to 271; these read NVGKSS, SDIAGTT, and DTAG. Residue Ser-228 coordinates Mg(2+). Residues Ser-243, Ile-245, and Thr-248 each coordinate K(+). Thr-249 contributes to the Mg(2+) binding site. Lys-442 is a binding site for (6S)-5-formyl-5,6,7,8-tetrahydrofolate.

The protein belongs to the TRAFAC class TrmE-Era-EngA-EngB-Septin-like GTPase superfamily. TrmE GTPase family. Homodimer. Heterotetramer of two MnmE and two MnmG subunits. K(+) is required as a cofactor.

It localises to the cytoplasm. In terms of biological role, exhibits a very high intrinsic GTPase hydrolysis rate. Involved in the addition of a carboxymethylaminomethyl (cmnm) group at the wobble position (U34) of certain tRNAs, forming tRNA-cmnm(5)s(2)U34. The polypeptide is tRNA modification GTPase MnmE (Campylobacter jejuni subsp. jejuni serotype O:2 (strain ATCC 700819 / NCTC 11168)).